The sequence spans 77 residues: Acyl carrier protein (77 aa).

Positions 2–77 constitute a Carrier domain; sequence SNIEERVKKI…AAIDYVTANQ (76 aa). The residue at position 37 (Ser37) is an O-(pantetheine 4'-phosphoryl)serine.

This sequence belongs to the acyl carrier protein (ACP) family. In terms of processing, 4'-phosphopantetheine is transferred from CoA to a specific serine of apo-ACP by AcpS. This modification is essential for activity because fatty acids are bound in thioester linkage to the sulfhydryl of the prosthetic group.

The protein localises to the cytoplasm. The protein operates within lipid metabolism; fatty acid biosynthesis. In terms of biological role, carrier of the growing fatty acid chain in fatty acid biosynthesis. The protein is Acyl carrier protein of Colwellia psychrerythraea (strain 34H / ATCC BAA-681) (Vibrio psychroerythus).